The sequence spans 330 residues: Aspartate--ammonia ligase (330 aa).

It belongs to the class-II aminoacyl-tRNA synthetase family. AsnA subfamily.

The protein resides in the cytoplasm. It catalyses the reaction L-aspartate + NH4(+) + ATP = L-asparagine + AMP + diphosphate + H(+). Its pathway is amino-acid biosynthesis; L-asparagine biosynthesis; L-asparagine from L-aspartate (ammonia route): step 1/1. This Escherichia coli (strain SMS-3-5 / SECEC) protein is Aspartate--ammonia ligase.